The chain runs to 453 residues: Na(+)/H(+) antiporter NhaA 2 (453 aa).

A run of 12 helical transmembrane segments spans residues 23 to 43 (FLHI…AALI), 74 to 94 (LHFW…GMEI), 111 to 131 (LPMA…LSFG), 139 to 159 (GWAV…ALLG), 168 to 188 (VFLL…IAFF), 191 to 211 (GGLD…VIGL), 214 to 234 (IGVG…LGIL), 235 to 255 (LTGA…PVTA), 316 to 336 (VAFG…LSGV), 345 to 365 (WVMI…IVSV), 386 to 406 (IMLV…IANL), and 419 to 439 (LGVL…GVWS).

Belongs to the NhaA Na(+)/H(+) (TC 2.A.33) antiporter family.

The protein localises to the cell inner membrane. It carries out the reaction Na(+)(in) + 2 H(+)(out) = Na(+)(out) + 2 H(+)(in). In terms of biological role, na(+)/H(+) antiporter that extrudes sodium in exchange for external protons. This Pseudomonas putida (strain ATCC 47054 / DSM 6125 / CFBP 8728 / NCIMB 11950 / KT2440) protein is Na(+)/H(+) antiporter NhaA 2.